Consider the following 242-residue polypeptide: Small ribosomal subunit protein uS2 (242 aa).

It belongs to the universal ribosomal protein uS2 family.

The chain is Small ribosomal subunit protein uS2 from Neisseria gonorrhoeae (strain ATCC 700825 / FA 1090).